Consider the following 668-residue polypeptide: MASQFCLPLAPRLSPLKPLKSHFTDFQVGICVAIQRSDKRIHLAVVTEINRENSWVTVEWVEKGVKKGKKIELETVLLLNPALASLEHQRSRRPLRPVSVVPSTAIGDQRTATKWIAMIPHRNETPSGDSQTLMIPSNPCLMKRKKSPCLREIEKLQKQREKRRRLQLEIRARRALDINTGNPNFETMRMIEEYRRRLDSSKMSSLEPPEDHRICVCVRKRPLNQRETTMKDLDIITIPSHNVVMVHESKQKVDLTRYLENQTFCFDHAFDDKASNELVYQFTARPLVESIFRKGMATCFAYGQTGSGKTHTMGGAFLGKAQDCSKGIYALVAQDVFLLLKTPAYEKLELKVYGTFFEIYGGKVYDLLNWKKKLQVLEDGNQQVQVVGLQEQEVSCVEEVLNLVELGNSCRTSGQTSVNAHSSRSHAVFQLILKAGGKLHGKFSLVDLAGNERGADTAKATRKRQLEGAEINKSLLALKECIRALGKNKSHTPFRASKLTQVLRDSFIGQNSYTCMIATISPGMTSCENTLNTLRYANRVKELALEARPYHHCVSPPGHEVPLMIENDNTNSGKSLQRDEVIQIPTVEKEEEKESDELTSKKEPAASWSRSNQWWEAIQETAEGVNGDVDFCIAQSLSVLEQKIGVLTDIQKKLQSLREDLQKKSQVE.

Position 125 is a phosphothreonine; by PLK1 (threonine 125). Positions 149–177 (CLREIEKLQKQREKRRRLQLEIRARRALD) form a coiled coil. A Phosphoserine; by PLK1 modification is found at serine 204. Residues 213-543 (RICVCVRKRP…LRYANRVKEL (331 aa)) form the Kinesin motor domain. Residue 303–310 (GQTGSGKT) coordinates ATP. Over residues 585-604 (PTVEKEEEKESDELTSKKEP) the composition is skewed to basic and acidic residues. The segment at 585 to 605 (PTVEKEEEKESDELTSKKEPA) is disordered. The stretch at 646 to 667 (VLTDIQKKLQSLREDLQKKSQV) forms a coiled coil.

The protein belongs to the TRAFAC class myosin-kinesin ATPase superfamily. Kinesin family. MCAK/KIF2 subfamily. Phosphorylation at Thr-125 by PLK1 is required for activity in the correction of kinetochore-microtubules attachment errors, while phosphorylation at Ser-204 also by PLK1 is required for the kinetochore localization and activity in prometaphase.

It is found in the cytoplasm. The protein resides in the cytoskeleton. The protein localises to the microtubule organizing center. It localises to the centrosome. Its subcellular location is the spindle. It is found in the chromosome. The protein resides in the centromere. The protein localises to the kinetochore. Functionally, plus end-directed microtubule-dependent motor required for spindle assembly and chromosome movement during mitosis. Has microtubule depolymerization activity. Plays a role in chromosome congression. The chain is Kinesin-like protein KIF2B (Kif2b) from Mus musculus (Mouse).